A 317-amino-acid chain; its full sequence is Transaldolase (317 aa).

Catalysis depends on lysine 126, which acts as the Schiff-base intermediate with substrate.

It belongs to the transaldolase family. Type 1 subfamily. As to quaternary structure, homodimer.

It is found in the cytoplasm. It catalyses the reaction D-sedoheptulose 7-phosphate + D-glyceraldehyde 3-phosphate = D-erythrose 4-phosphate + beta-D-fructose 6-phosphate. It participates in carbohydrate degradation; pentose phosphate pathway; D-glyceraldehyde 3-phosphate and beta-D-fructose 6-phosphate from D-ribose 5-phosphate and D-xylulose 5-phosphate (non-oxidative stage): step 2/3. In terms of biological role, transaldolase is important for the balance of metabolites in the pentose-phosphate pathway. In Burkholderia orbicola (strain AU 1054), this protein is Transaldolase.